Reading from the N-terminus, the 271-residue chain is Aminodeoxychorismate lyase (271 aa).

The residue at position 140 (K140) is an N6-(pyridoxal phosphate)lysine.

It belongs to the class-IV pyridoxal-phosphate-dependent aminotransferase family. Homodimer. It depends on pyridoxal 5'-phosphate as a cofactor.

The enzyme catalyses 4-amino-4-deoxychorismate = 4-aminobenzoate + pyruvate + H(+). Its pathway is cofactor biosynthesis; tetrahydrofolate biosynthesis; 4-aminobenzoate from chorismate: step 2/2. Involved in the biosynthesis of p-aminobenzoate (PABA), a precursor of tetrahydrofolate. Converts 4-amino-4-deoxychorismate into 4-aminobenzoate (PABA) and pyruvate. In Vibrio harveyi (Beneckea harveyi), this protein is Aminodeoxychorismate lyase (pabC).